Here is a 323-residue protein sequence, read N- to C-terminus: tRNA dimethylallyltransferase (323 aa).

Residue 12–19 (GPTASGKT) participates in ATP binding. 14 to 19 (TASGKT) serves as a coordination point for substrate. Interaction with substrate tRNA regions lie at residues 37 to 40 (DSAL) and 161 to 165 (QRLVR).

This sequence belongs to the IPP transferase family. In terms of assembly, monomer. It depends on Mg(2+) as a cofactor.

The enzyme catalyses adenosine(37) in tRNA + dimethylallyl diphosphate = N(6)-dimethylallyladenosine(37) in tRNA + diphosphate. Functionally, catalyzes the transfer of a dimethylallyl group onto the adenine at position 37 in tRNAs that read codons beginning with uridine, leading to the formation of N6-(dimethylallyl)adenosine (i(6)A). This is tRNA dimethylallyltransferase from Stutzerimonas stutzeri (strain A1501) (Pseudomonas stutzeri).